Consider the following 162-residue polypeptide: Cyclic pyranopterin monophosphate synthase (162 aa).

Substrate is bound by residues 75 to 77 and 113 to 114; these read LCH and ME. Asp-128 is a catalytic residue.

This sequence belongs to the MoaC family. Homohexamer; trimer of dimers.

It catalyses the reaction (8S)-3',8-cyclo-7,8-dihydroguanosine 5'-triphosphate = cyclic pyranopterin phosphate + diphosphate. It functions in the pathway cofactor biosynthesis; molybdopterin biosynthesis. Functionally, catalyzes the conversion of (8S)-3',8-cyclo-7,8-dihydroguanosine 5'-triphosphate to cyclic pyranopterin monophosphate (cPMP). This Klebsiella pneumoniae (strain 342) protein is Cyclic pyranopterin monophosphate synthase.